The chain runs to 395 residues: Nucleoside diphosphate kinase homolog 7 (395 aa).

The DM10 domain occupies 22–110 (QSERFAFIAE…YTARQLGSRK (89 aa)).

It belongs to the NDK family. As to quaternary structure, component of sperm flagellar doublet microtubules. Component of the gamma-tubulin ring complex. As to expression, widely expressed. Expressed in the flagellum of epididymal sperm but not in testicular sperm (at protein level).

Its subcellular location is the cytoplasm. It localises to the cytoskeleton. It is found in the microtubule organizing center. The protein localises to the centrosome. The protein resides in the nucleus. Its subcellular location is the spindle. It localises to the cilium axoneme. It is found in the flagellum axoneme. The protein localises to the cell projection. The protein resides in the cilium. In terms of biological role, possesses an intrinsic kinase activity. Displays 3'-5' exonuclease activity with a preference for single-stranded DNA. Does not seem to have nucleoside diphosphate kinase activity. Functional component of the gamma-tubulin ring complex, implicated in the regulation of the microtubule-nucleating activity of the gamma-tubulin ring complex in centrosomes, in a kinase activity-dependent manner. Part of the dynein-decorated doublet microtubules (DMTs) in cilia axoneme, which is required for motile cilia beating. The polypeptide is Nucleoside diphosphate kinase homolog 7 (Nme7) (Rattus norvegicus (Rat)).